A 204-amino-acid polypeptide reads, in one-letter code: Large ribosomal subunit protein eL15 (204 aa).

The protein belongs to the eukaryotic ribosomal protein eL15 family. In terms of assembly, component of the large ribosomal subunit.

Its subcellular location is the cytoplasm. Its function is as follows. Component of the large ribosomal subunit. The ribosome is a large ribonucleoprotein complex responsible for the synthesis of proteins in the cell. The sequence is that of Large ribosomal subunit protein eL15 (rpl15) from Cyprinus carpio (Common carp).